Consider the following 102-residue polypeptide: Protamine-2 (102 aa).

Residues 1 to 102 form a disordered region; sequence MVRYRMRSLS…RTRRRRCRRH (102 aa). A phosphoserine mark is found at Ser-8 and Ser-10. Residues 8–17 are compositionally biased toward basic and acidic residues; sequence SLSERSHEVH. Residues 18–29 are compositionally biased toward low complexity; the sequence is GQQVHGQDQGHN. Residues 39–48 show a composition bias toward basic and acidic residues; the sequence is EHVEVYERTH. Basic residues predominate over residues 49–102; it reads GHSHYRRRHCSRRRLHRIHRRRHRSCRRRRRRSCRHRRRHRRGCRTRRRRCRRH.

Belongs to the protamine P2 family. Interacts with TDRP. Proteolytic processing into mature chains is required for histone eviction during spermatogenesis. Transition proteins (TNP1 and TNP2) are required for processing. As to expression, testis.

The protein resides in the nucleus. The protein localises to the chromosome. Functionally, protamines substitute for histones in the chromatin of sperm during the haploid phase of spermatogenesis. They compact sperm DNA into a highly condensed, stable and inactive complex. The chain is Protamine-2 (PRM2) from Macaca mulatta (Rhesus macaque).